The sequence spans 342 residues: tRNA-specific 2-thiouridylase MnmA (342 aa).

ATP-binding positions include 6-13 (LLSGGVDS) and L32. The Nucleophile role is filled by C92. The cysteines at positions 92 and 191 are disulfide-linked. ATP is bound at residue G116. The interaction with tRNA stretch occupies residues 138 to 140 (KDQ). Catalysis depends on C191, which acts as the Cysteine persulfide intermediate. Residues 293 to 294 (RY) form an interaction with tRNA region.

This sequence belongs to the MnmA/TRMU family.

The protein localises to the cytoplasm. The catalysed reaction is S-sulfanyl-L-cysteinyl-[protein] + uridine(34) in tRNA + AH2 + ATP = 2-thiouridine(34) in tRNA + L-cysteinyl-[protein] + A + AMP + diphosphate + H(+). Its function is as follows. Catalyzes the 2-thiolation of uridine at the wobble position (U34) of tRNA, leading to the formation of s(2)U34. The polypeptide is tRNA-specific 2-thiouridylase MnmA (Helicobacter pylori (strain ATCC 700392 / 26695) (Campylobacter pylori)).